The sequence spans 280 residues: 30 kDa immediate-early protein 2 (280 aa).

The disordered stretch occupies residues 36 to 164 (SEEEQGEEVE…KKSKRISELD (129 aa)). Low complexity-rich tracts occupy residues 47 to 67 (RGATASSPSTGSGTPRVTSPT), 90 to 101 (SSSSSSCSSASD), and 132 to 147 (AASSSLLSCGHQSSGG).

In terms of biological role, activates the E1.7 promoter. This activation is augmented by the IE1 protein. It down-regulates the transcription of genes under the control of the major IE promoter. The chain is 30 kDa immediate-early protein 2 (UL122) from Human cytomegalovirus (strain Towne) (HHV-5).